The sequence spans 388 residues: Succinate--CoA ligase [ADP-forming] subunit beta (388 aa).

The ATP-grasp domain maps to 9 to 244 (KQIFAQYGLP…PSQEDAREAA (236 aa)). ATP is bound by residues Lys46, 53 to 55 (GRG), Glu99, Ala102, and Glu107. Asn199 and Asp213 together coordinate Mg(2+). Residues Asn264 and 321–323 (GIV) contribute to the substrate site.

The protein belongs to the succinate/malate CoA ligase beta subunit family. In terms of assembly, heterotetramer of two alpha and two beta subunits. Mg(2+) is required as a cofactor.

The enzyme catalyses succinate + ATP + CoA = succinyl-CoA + ADP + phosphate. The catalysed reaction is GTP + succinate + CoA = succinyl-CoA + GDP + phosphate. The protein operates within carbohydrate metabolism; tricarboxylic acid cycle; succinate from succinyl-CoA (ligase route): step 1/1. Its function is as follows. Succinyl-CoA synthetase functions in the citric acid cycle (TCA), coupling the hydrolysis of succinyl-CoA to the synthesis of either ATP or GTP and thus represents the only step of substrate-level phosphorylation in the TCA. The beta subunit provides nucleotide specificity of the enzyme and binds the substrate succinate, while the binding sites for coenzyme A and phosphate are found in the alpha subunit. This Mannheimia succiniciproducens (strain KCTC 0769BP / MBEL55E) protein is Succinate--CoA ligase [ADP-forming] subunit beta.